The chain runs to 204 residues: Lymphotoxin-alpha (204 aa).

The signal sequence occupies residues 1-33 (MTPPGRLYLLRVCSTPPLLLLGLLLALPLEAQG). Residues 62 to 204 (PAAHLVGDPS…SSVFFGAFAL (143 aa)) form the THD domain. N-linked (GlcNAc...) asparagine glycosylation is present at N95. C119 and C155 are oxidised to a cystine.

The protein belongs to the tumor necrosis factor family. As to quaternary structure, homotrimer, and heterotrimer of either two LTB and one LTA subunits or (less prevalent) two LTA and one LTB subunits. Interacts with TNFRSF14.

It is found in the secreted. It localises to the membrane. Functionally, cytokine that in its homotrimeric form binds to TNFRSF1A/TNFR1, TNFRSF1B/TNFBR and TNFRSF14/HVEM. In its heterotrimeric form with LTB binds to TNFRSF3/LTBR. Lymphotoxin is produced by lymphocytes and is cytotoxic for a wide range of tumor cells in vitro and in vivo. The chain is Lymphotoxin-alpha (LTA) from Bos taurus (Bovine).